A 223-amino-acid polypeptide reads, in one-letter code: Uracil-DNA glycosylase (223 aa).

Catalysis depends on Asp-61, which acts as the Proton acceptor.

This sequence belongs to the uracil-DNA glycosylase (UDG) superfamily. UNG family.

It is found in the cytoplasm. The catalysed reaction is Hydrolyzes single-stranded DNA or mismatched double-stranded DNA and polynucleotides, releasing free uracil.. Its function is as follows. Excises uracil residues from the DNA which can arise as a result of misincorporation of dUMP residues by DNA polymerase or due to deamination of cytosine. The sequence is that of Uracil-DNA glycosylase from Haemophilus ducreyi (strain 35000HP / ATCC 700724).